The primary structure comprises 92 residues: MARSLKKGPFADDHLLKKVQAIIDGKAPKKPIKTWSRRSTIFPDFVGLTFAVHNGKQFIEVYVTDDMVGHKLGEFSPTRTFSGHGADKSKKK.

The protein belongs to the universal ribosomal protein uS19 family.

Functionally, protein S19 forms a complex with S13 that binds strongly to the 16S ribosomal RNA. This is Small ribosomal subunit protein uS19 from Mycoplasmopsis synoviae (strain 53) (Mycoplasma synoviae).